The following is a 136-amino-acid chain: Cell division protein SepF 3 (136 aa).

The protein belongs to the SepF family. Homodimer. Interacts with FtsZ.

Its subcellular location is the cytoplasm. Cell division protein that is part of the divisome complex and is recruited early to the Z-ring. Probably stimulates Z-ring formation, perhaps through the cross-linking of FtsZ protofilaments. Its function overlaps with FtsA. This is Cell division protein SepF 3 from Streptomyces coelicolor (strain ATCC BAA-471 / A3(2) / M145).